A 244-amino-acid polypeptide reads, in one-letter code: MSFTVYPALDIRNGRVVRLLQGDYARETHYGNDVLPRAQAFADAGAQWMHLVDLDAAKAGGYTLATTLGEIARATGLQVQTGGGVRSRDDVASILDAGAARVVIGSLAVRDSEMVIAWLQEFGADRLTIALDTRQDTDGIWQLPVHGWTETADATLDQLAVRYAQAGLKHLLCTDIARDGMLSGPNAALYAHLRSLTPQLQVQVSGGARNLADVAAAKAAGCAGIVLGKALLEGHLDLDEALAC.

Aspartate 10 serves as the catalytic Proton acceptor. The active-site Proton donor is the aspartate 132.

It belongs to the HisA/HisF family.

It is found in the cytoplasm. It catalyses the reaction 1-(5-phospho-beta-D-ribosyl)-5-[(5-phospho-beta-D-ribosylamino)methylideneamino]imidazole-4-carboxamide = 5-[(5-phospho-1-deoxy-D-ribulos-1-ylimino)methylamino]-1-(5-phospho-beta-D-ribosyl)imidazole-4-carboxamide. Its pathway is amino-acid biosynthesis; L-histidine biosynthesis; L-histidine from 5-phospho-alpha-D-ribose 1-diphosphate: step 4/9. The chain is 1-(5-phosphoribosyl)-5-[(5-phosphoribosylamino)methylideneamino] imidazole-4-carboxamide isomerase from Xanthomonas oryzae pv. oryzae (strain MAFF 311018).